A 298-amino-acid chain; its full sequence is ATP synthase gamma chain (298 aa).

This sequence belongs to the ATPase gamma chain family. In terms of assembly, F-type ATPases have 2 components, CF(1) - the catalytic core - and CF(0) - the membrane proton channel. CF(1) has five subunits: alpha(3), beta(3), gamma(1), delta(1), epsilon(1). CF(0) has three main subunits: a, b and c.

It localises to the cell inner membrane. Functionally, produces ATP from ADP in the presence of a proton gradient across the membrane. The gamma chain is believed to be important in regulating ATPase activity and the flow of protons through the CF(0) complex. The protein is ATP synthase gamma chain of Francisella tularensis subsp. tularensis (strain WY96-3418).